Consider the following 96-residue polypeptide: NADH-ubiquinone oxidoreductase chain 4L (96 aa).

The next 3 helical transmembrane spans lie at 2-22 (IMFLYSSFSMILFILGLFCFV), 28-48 (LLSMLLSLEFIVLILFFMLFI), and 62-82 (MFLTFSVCEGALGLSILVSMI).

Belongs to the complex I subunit 4L family.

The protein localises to the mitochondrion membrane. The enzyme catalyses a ubiquinone + NADH + 5 H(+)(in) = a ubiquinol + NAD(+) + 4 H(+)(out). In terms of biological role, core subunit of the mitochondrial membrane respiratory chain NADH dehydrogenase (Complex I) that is believed to belong to the minimal assembly required for catalysis. Complex I functions in the transfer of electrons from NADH to the respiratory chain. The immediate electron acceptor for the enzyme is believed to be ubiquinone. This is NADH-ubiquinone oxidoreductase chain 4L (mt:ND4L) from Drosophila nasuta F (Fruit fly).